Consider the following 404-residue polypeptide: Cysteine desulfurase IscS (404 aa).

Pyridoxal 5'-phosphate-binding positions include 75 to 76, Asn-155, Gln-183, and 203 to 205; these read AT and SGH. Position 206 is an N6-(pyridoxal phosphate)lysine (Lys-206). Thr-243 contributes to the pyridoxal 5'-phosphate binding site. The active-site Cysteine persulfide intermediate is Cys-328. Cys-328 is a binding site for [2Fe-2S] cluster.

It belongs to the class-V pyridoxal-phosphate-dependent aminotransferase family. NifS/IscS subfamily. As to quaternary structure, homodimer. Forms a heterotetramer with IscU, interacts with other sulfur acceptors. The cofactor is pyridoxal 5'-phosphate.

The protein localises to the cytoplasm. It carries out the reaction (sulfur carrier)-H + L-cysteine = (sulfur carrier)-SH + L-alanine. It participates in cofactor biosynthesis; iron-sulfur cluster biosynthesis. Master enzyme that delivers sulfur to a number of partners involved in Fe-S cluster assembly, tRNA modification or cofactor biosynthesis. Catalyzes the removal of elemental sulfur atoms from cysteine to produce alanine. Functions as a sulfur delivery protein for Fe-S cluster synthesis onto IscU, an Fe-S scaffold assembly protein, as well as other S acceptor proteins. The polypeptide is Cysteine desulfurase IscS (Edwardsiella ictaluri (strain 93-146)).